The following is a 511-amino-acid chain: Cytochrome P450 714C3 (511 aa).

The Lumenal segment spans residues 1-6 (MEKLLA). Residues 7–27 (LIVVLVILLSLALFYLCNILW) traverse the membrane as a helical; Signal-anchor for type III membrane protein segment. Residues 28–511 (LRAVKIRKKL…GLPLMVTKLP (484 aa)) are Cytoplasmic-facing. Residue C458 participates in heme binding.

This sequence belongs to the cytochrome P450 family. Heme serves as cofactor.

The protein localises to the membrane. The protein is Cytochrome P450 714C3 (CYP714C3) of Oryza sativa subsp. japonica (Rice).